A 648-amino-acid polypeptide reads, in one-letter code: Macrolide export ATP-binding/permease protein MacB (648 aa).

Residues 1-272 (MTPLLELKDI…RALAANKMRT (272 aa)) are Cytoplasmic-facing. Positions 5-243 (LELKDIRRSY…TGGTEPVVNT (239 aa)) constitute an ABC transporter domain. 41-48 (GASGSGKS) provides a ligand contact to ATP. A helical transmembrane segment spans residues 273–293 (LLTMLGIIIGIASVVSIVVVG). The Periplasmic segment spans residues 294-522 (DAAKQMVLAD…TVEKTTRTLQ (229 aa)). A helical transmembrane segment spans residues 523–543 (LFLTLVAVISLVVGGIGVMNI). Residues 544 to 575 (MLVSVTERTREIGIRMAVGARASDVLQQFLIE) are Cytoplasmic-facing. Residues 576–596 (AVLVCLVGGALGITLSLLIAF) form a helical membrane-spanning segment. The Periplasmic segment spans residues 597 to 610 (TLQLFLPGWEIGFS). Residues 611–631 (PLALLLAFLCSTVTGILFGWL) form a helical membrane-spanning segment. Residues 632–648 (PARNAARLDPVDALARE) lie on the Cytoplasmic side of the membrane.

It belongs to the ABC transporter superfamily. Macrolide exporter (TC 3.A.1.122) family. Homodimer. Part of the tripartite efflux system MacAB-TolC, which is composed of an inner membrane transporter, MacB, a periplasmic membrane fusion protein, MacA, and an outer membrane component, TolC. The complex forms a large protein conduit and can translocate molecules across both the inner and outer membranes. Interacts with MacA.

The protein resides in the cell inner membrane. ATPase activity is stimulated by interaction with MacA and inhibited by vanadate. Functionally, part of the tripartite efflux system MacAB-TolC. MacB is a non-canonical ABC transporter that contains transmembrane domains (TMD), which form a pore in the inner membrane, and an ATP-binding domain (NBD), which is responsible for energy generation. When overexpressed, the system confers resistance against macrolides composed of 14- and 15-membered lactones but no or weak resistance against 16-membered ones. In addition, the system could also transport R-LPS or a similar glycolipid. The protein is Macrolide export ATP-binding/permease protein MacB of Escherichia coli (strain K12).